A 119-amino-acid chain; its full sequence is Phytosulfokines 2 (119 aa).

Positions 1–34 are cleaved as a signal peptide; it reads MSTTRGVSSSSAAAALALLLLFALCFFSFHSAAA. Positions 35–109 are excised as a propeptide; the sequence is ARAVPRDEHQ…RRLLSDAHLD (75 aa). Sulfotyrosine is present on residues Tyr110 and Tyr112. The propeptide occupies 115–119; the sequence is HKNKP.

This sequence belongs to the phytosulfokine family. Post-translationally, sulfation is important for activity and for the binding to a putative membrane receptor. PSK-alpha is produced by endopeptidase digestion. PSK-beta is produced from PSK-alpha by exopeptidase digestion.

The protein resides in the secreted. Promotes plant cell differentiation, organogenesis and somatic embryogenesis as well as cell proliferation. The protein is Phytosulfokines 2 (PSK2) of Oryza sativa subsp. indica (Rice).